The primary structure comprises 557 residues: Formate--tetrahydrofolate ligase (557 aa).

Residue 44-51 coordinates ATP; sequence TPLGEGKS.

Belongs to the formate--tetrahydrofolate ligase family.

The catalysed reaction is (6S)-5,6,7,8-tetrahydrofolate + formate + ATP = (6R)-10-formyltetrahydrofolate + ADP + phosphate. It participates in one-carbon metabolism; tetrahydrofolate interconversion. The protein is Formate--tetrahydrofolate ligase of Desulfotalea psychrophila (strain LSv54 / DSM 12343).